Reading from the N-terminus, the 1407-residue chain is DNA-directed RNA polymerase subunit beta' (1407 aa).

Zn(2+) is bound by residues Cys70, Cys72, Cys85, and Cys88. The Mg(2+) site is built by Asp460, Asp462, and Asp464. The Zn(2+) site is built by Cys814, Cys888, Cys895, and Cys898.

It belongs to the RNA polymerase beta' chain family. The RNAP catalytic core consists of 2 alpha, 1 beta, 1 beta' and 1 omega subunit. When a sigma factor is associated with the core the holoenzyme is formed, which can initiate transcription. The cofactor is Mg(2+). Zn(2+) serves as cofactor.

It carries out the reaction RNA(n) + a ribonucleoside 5'-triphosphate = RNA(n+1) + diphosphate. Its function is as follows. DNA-dependent RNA polymerase catalyzes the transcription of DNA into RNA using the four ribonucleoside triphosphates as substrates. This is DNA-directed RNA polymerase subunit beta' from Salmonella paratyphi A (strain ATCC 9150 / SARB42).